Here is a 91-residue protein sequence, read N- to C-terminus: Small ribosomal subunit protein uS19 (91 aa).

The protein belongs to the universal ribosomal protein uS19 family.

In terms of biological role, protein S19 forms a complex with S13 that binds strongly to the 16S ribosomal RNA. The chain is Small ribosomal subunit protein uS19 from Ralstonia nicotianae (strain ATCC BAA-1114 / GMI1000) (Ralstonia solanacearum).